Consider the following 227-residue polypeptide: ATP synthase F(0) complex subunit a (227 aa).

A run of 6 helical transmembrane segments spans residues 14 to 34 (FLGI…FPSP), 69 to 89 (WAMI…LGLL), 98 to 118 (QLSM…LIGM), 139 to 159 (IPIL…ALGV), 165 to 185 (LTAG…MLSI), and 189 to 209 (IATL…AVAM).

It belongs to the ATPase A chain family. As to quaternary structure, component of the ATP synthase complex composed at least of ATP5F1A/subunit alpha, ATP5F1B/subunit beta, ATP5MC1/subunit c (homooctomer), MT-ATP6/subunit a, MT-ATP8/subunit 8, ATP5ME/subunit e, ATP5MF/subunit f, ATP5MG/subunit g, ATP5MK/subunit k, ATP5MJ/subunit j, ATP5F1C/subunit gamma, ATP5F1D/subunit delta, ATP5F1E/subunit epsilon, ATP5PF/subunit F6, ATP5PB/subunit b, ATP5PD/subunit d, ATP5PO/subunit OSCP. ATP synthase complex consists of a soluble F(1) head domain (subunits alpha(3) and beta(3)) - the catalytic core - and a membrane F(0) domain - the membrane proton channel (subunits c, a, 8, e, f, g, k and j). These two domains are linked by a central stalk (subunits gamma, delta, and epsilon) rotating inside the F1 region and a stationary peripheral stalk (subunits F6, b, d, and OSCP). Interacts with DNAJC30; interaction is direct.

It localises to the mitochondrion inner membrane. The enzyme catalyses H(+)(in) = H(+)(out). In terms of biological role, subunit a, of the mitochondrial membrane ATP synthase complex (F(1)F(0) ATP synthase or Complex V) that produces ATP from ADP in the presence of a proton gradient across the membrane which is generated by electron transport complexes of the respiratory chain. ATP synthase complex consist of a soluble F(1) head domain - the catalytic core - and a membrane F(1) domain - the membrane proton channel. These two domains are linked by a central stalk rotating inside the F(1) region and a stationary peripheral stalk. During catalysis, ATP synthesis in the catalytic domain of F(1) is coupled via a rotary mechanism of the central stalk subunits to proton translocation. With the subunit c (ATP5MC1), forms the proton-conducting channel in the F(0) domain, that contains two crucial half-channels (inlet and outlet) that facilitate proton movement from the mitochondrial intermembrane space (IMS) into the matrix. Protons are taken up via the inlet half-channel and released through the outlet half-channel, following a Grotthuss mechanism. In Polypterus ornatipinnis (Ornate bichir), this protein is ATP synthase F(0) complex subunit a.